A 426-amino-acid polypeptide reads, in one-letter code: MKHLTEMVRQHKAGKTNGIYAVCSAHPLVLEAAIRYASANQTPLLIEATSNQVDQFGGYTGMTPADFRGFVCQLAESLNFPQDALILGGDHLGPNRWQNLPAAQAMANADDLIKSYVAAGFKKIHLDCSMSCQDDPIPLTDDIVAERAARLAKVAEETCLEHFGEADLEYVIGTEVPVPGGAHETLSELAVTTPDAARATLEAHRHAFEKQGLNAIWPRIIALVVQPGVEFDHTNVIDYQPAKASALSQMVENYETLIFEAHSTDYQTPQSLRQLVIDHFAILKVGPALTFALREALFSLAAIEEELVPAKACSGLRQVLEDVMLDRPEYWQSHYHGDGNARRLARGYSYSDRVRYYWPDSQIDDAFAHLVRNLADSPIPLPLISQYLPLQYVKVRSGELQPTPRELIINHIQDILAQYHTACEGQ.

Belongs to the GatZ/KbaZ family. KbaZ subfamily. As to quaternary structure, forms a complex with KbaY.

It functions in the pathway carbohydrate metabolism; D-tagatose 6-phosphate degradation; D-glyceraldehyde 3-phosphate and glycerone phosphate from D-tagatose 6-phosphate: step 2/2. In terms of biological role, component of the tagatose-1,6-bisphosphate aldolase KbaYZ that is required for full activity and stability of the Y subunit. Could have a chaperone-like function for the proper and stable folding of KbaY. When expressed alone, KbaZ does not show any aldolase activity. The protein is D-tagatose-1,6-bisphosphate aldolase subunit KbaZ of Escherichia coli O139:H28 (strain E24377A / ETEC).